Consider the following 719-residue polypeptide: Protein ENHANCED DISEASE RESISTANCE 2-like (719 aa).

The region spanning 3 to 110 (KVVYEGWMVR…WKEKIECVID (108 aa)) is the PH domain. Residues 134–173 (AGRTASSSDHESPFSALEDENDSQRDLLRRTTIGNGPPES) form a disordered region. The START domain maps to 180-392 (EFDAELSNQS…VSGLREWFSQ (213 aa)). A disordered region spans residues 414–478 (ALGKGGKHHH…ETDAKKTEEP (65 aa)). Residues 426 to 439 (SLSIDQTNGASRNS) are compositionally biased toward polar residues. Residues 442 to 461 (MDEDSDDDDEFQIPDSEPEP) show a composition bias toward acidic residues. Positions 462 to 477 (ETSKQDQETDAKKTEE) are enriched in basic and acidic residues. Residues 665 to 685 (GVLGLVIGVITSLVVEMAFLV) form a helical membrane-spanning segment.

It is found in the endoplasmic reticulum membrane. The protein resides in the cell membrane. Its subcellular location is the endosome membrane. Its function is as follows. Binds to phosphatidylinositol-4-phosphate (PtdIns(4)P). May regulate the salicylic acid- (SA-) mediated resistance to pathogens. In Arabidopsis thaliana (Mouse-ear cress), this protein is Protein ENHANCED DISEASE RESISTANCE 2-like (EDR2L).